The chain runs to 172 residues: Ubiquitin-conjugating enzyme E2 2 (172 aa).

In terms of domain architecture, UBC core spans 4 to 150 (PARRRLMRDF…VKETVEKSWE (147 aa)). Cys88 serves as the catalytic Glycyl thioester intermediate. Ser120 carries the phosphoserine; by SGV1 modification. A disordered region spans residues 145 to 172 (VEKSWEDDMDDMDDDDDDDDDDDDDEAD). Over residues 151–172 (DDMDDMDDDDDDDDDDDDDEAD) the composition is skewed to acidic residues.

It belongs to the ubiquitin-conjugating enzyme family. As to quaternary structure, forms a heterodimer complexes with the E3 enzymes BRE1, RAD18 and UBR1. Also interacts with UBR2, RTF1, PAF1 and the RNA polymerase II hyperphosphorylated form. The interaction with RNA polymerase II is BRE1- and PAF1-dependent. The N-terminus is blocked.

It localises to the cytoplasm. The protein resides in the nucleus. It catalyses the reaction S-ubiquitinyl-[E1 ubiquitin-activating enzyme]-L-cysteine + [E2 ubiquitin-conjugating enzyme]-L-cysteine = [E1 ubiquitin-activating enzyme]-L-cysteine + S-ubiquitinyl-[E2 ubiquitin-conjugating enzyme]-L-cysteine.. Its pathway is protein modification; protein ubiquitination. Functionally, E2 ubiquitin-conjugating enzyme that accepts ubiquitin from the ubiquitin-activating enzyme E1 and transfers it to a E3 ubiquitin-protein ligase. In association with the E3 enzyme BRE1 and LGE1, it plays a role in transcription regulation by catalyzing the monoubiquitination of histone H2B to form H2BK123ub1. H2BK123ub1 gives a specific tag for epigenetic transcriptional activation, elongation by RNA polymerase II, telomeric silencing, and is also a prerequisite for H3K4me and H3K79me formation. In association with the E3 enzyme RAD18, it catalyzes the monoubiquitination of POL30 'Lys-164', involved in postreplication repair of UV-damaged DNA. The RAD6/UBC2-RAD18 complex is also involved in prevention of spontaneous mutations caused by 7,8-dihydro-8-oxoguanine. In association with the E3 enzyme UBR1, is involved in N-end rule-dependent protein degradation. Also involved in sporulation. In Saccharomyces cerevisiae (strain ATCC 204508 / S288c) (Baker's yeast), this protein is Ubiquitin-conjugating enzyme E2 2 (RAD6).